The chain runs to 156 residues: ATP synthase subunit b 1 (156 aa).

Residues 7–29 form a helical membrane-spanning segment; the sequence is LLGQAISFALFVWFCMKYVWPPL.

It belongs to the ATPase B chain family. In terms of assembly, F-type ATPases have 2 components, F(1) - the catalytic core - and F(0) - the membrane proton channel. F(1) has five subunits: alpha(3), beta(3), gamma(1), delta(1), epsilon(1). F(0) has three main subunits: a(1), b(2) and c(10-14). The alpha and beta chains form an alternating ring which encloses part of the gamma chain. F(1) is attached to F(0) by a central stalk formed by the gamma and epsilon chains, while a peripheral stalk is formed by the delta and b chains.

The protein resides in the cell inner membrane. Functionally, f(1)F(0) ATP synthase produces ATP from ADP in the presence of a proton or sodium gradient. F-type ATPases consist of two structural domains, F(1) containing the extramembraneous catalytic core and F(0) containing the membrane proton channel, linked together by a central stalk and a peripheral stalk. During catalysis, ATP synthesis in the catalytic domain of F(1) is coupled via a rotary mechanism of the central stalk subunits to proton translocation. Component of the F(0) channel, it forms part of the peripheral stalk, linking F(1) to F(0). In Vibrio campbellii (strain ATCC BAA-1116), this protein is ATP synthase subunit b 1.